The following is a 431-amino-acid chain: Phosphoribosylamine--glycine ligase (431 aa).

An ATP-grasp domain is found at 107-315; sequence RWLMEEYKIP…LVEIGEEIVD (209 aa). 134–193 serves as a coordination point for ATP; that stretch reads IDDFGRPVVVKPLGLTGGKGVKVVGYQLKDNEEAKAYAEELIKRDGKVLIEERTDGVEFT. The Mg(2+) site is built by Gln-273, Glu-285, and Asn-287. Gln-273, Glu-285, and Asn-287 together coordinate Mn(2+).

It belongs to the GARS family. Mg(2+) serves as cofactor. Mn(2+) is required as a cofactor.

It catalyses the reaction 5-phospho-beta-D-ribosylamine + glycine + ATP = N(1)-(5-phospho-beta-D-ribosyl)glycinamide + ADP + phosphate + H(+). It participates in purine metabolism; IMP biosynthesis via de novo pathway; N(1)-(5-phospho-D-ribosyl)glycinamide from 5-phospho-alpha-D-ribose 1-diphosphate: step 2/2. This chain is Phosphoribosylamine--glycine ligase, found in Thermococcus kodakarensis (strain ATCC BAA-918 / JCM 12380 / KOD1) (Pyrococcus kodakaraensis (strain KOD1)).